Reading from the N-terminus, the 353-residue chain is GDP-mannose transporter (353 aa).

Over 1–31 the chain is Cytoplasmic; it reads MGLLLSYLFGYIFYSVNKKFHIMEKFGASNS. Residues 32 to 52 traverse the membrane as a helical segment; sequence IVNNGPVSIFAYCASSILMTV. At 53 to 66 the chain is on the lumenal side; that stretch reads TNKFVVGAYEFNLN. Residues 67-87 traverse the membrane as a helical segment; the sequence is FFLLAVQAAVCLVTIATLKGL. The Cytoplasmic portion of the chain corresponds to 88–102; it reads GIITYRQFNKDEAKK. The chain crosses the membrane as a helical span at residues 103 to 122; that stretch reads WFPIAFLLVLMIYTSSKALQ. Residues 123 to 125 lie on the Lumenal side of the membrane; that stretch reads YLS. Residues 126–148 traverse the membrane as a helical segment; that stretch reads IPVYTIFKNLTIILIAYGEVIWF. Residues 149–154 lie on the Cytoplasmic side of the membrane; the sequence is GGKVTT. The helical transmembrane segment at 155–172 threads the bilayer; that stretch reads MALGSFILMVLSSVIAYY. At 173 to 187 the chain is on the lumenal side; that stretch reads GDTAETGEKTAEMHL. The chain crosses the membrane as a helical span at residues 188–208; it reads LYLGYAWMFTNCFSSAAFVLI. At 209-227 the chain is on the cytoplasmic side; that stretch reads MRKRIKLTNFKDFDTMYYN. Residues 228-248 form a helical membrane-spanning segment; that stretch reads NLLSLPLLLVFSFLFEDWSSV. At 249–262 the chain is on the lumenal side; sequence NLNKNFPPDNRNTT. Asn260 carries N-linked (GlcNAc...) asparagine glycosylation. Residues 263-283 form a helical membrane-spanning segment; the sequence is IFVMILSGASSVGISYCSAWC. Over 284-290 the chain is Cytoplasmic; sequence VRVTSST. The chain crosses the membrane as a helical span at residues 291–313; sequence TYSMVGALNKLPIALSGLVFFNA. The Lumenal segment spans residues 314–316; it reads AVN. Residues 317–336 form a helical membrane-spanning segment; the sequence is FWSVSSIFVGFLAGVFYAVA. Residues 337 to 353 lie on the Cytoplasmic side of the membrane; it reads KQKQQKENAQQLPVANK.

Belongs to the TPT transporter family. SLC35D subfamily. As to quaternary structure, homooligomer.

Its subcellular location is the golgi apparatus membrane. The protein resides in the cytoplasmic vesicle membrane. The protein localises to the endoplasmic reticulum membrane. Functionally, involved in the import of GDP-mannose from the cytoplasm into the Golgi lumen. This Meyerozyma guilliermondii (strain ATCC 6260 / CBS 566 / DSM 6381 / JCM 1539 / NBRC 10279 / NRRL Y-324) (Yeast) protein is GDP-mannose transporter (VRG4).